A 963-amino-acid polypeptide reads, in one-letter code: Putative RNA Helicase B962L (963 aa).

In terms of domain architecture, Helicase ATP-binding spans 43–229; sequence IPTSLADRVL…FGIGKENIIL (187 aa). An ATP-binding site is contributed by 56–63; sequence SRTGSGKS. Positions 167-170 match the DEAH box motif; that stretch reads DEAH. The 207-residue stretch at 253–459 folds into the Helicase C-terminal domain; that stretch reads ACETALTIHK…TIKKNKEGVF (207 aa). A helical membrane pass occupies residues 521-541; that stretch reads GYFWQAAISDIAIILAVVSVV.

This sequence belongs to the DEAD box helicase family. DEAH subfamily.

It localises to the host membrane. The protein resides in the virion. The catalysed reaction is ATP + H2O = ADP + phosphate + H(+). The sequence is that of Putative RNA Helicase B962L from African swine fever virus (isolate Tick/Malawi/Lil 20-1/1983) (ASFV).